Reading from the N-terminus, the 326-residue chain is F-box/LRR-repeat protein 12 (326 aa).

Residues 1-47 (MATFADLPDSVLLEIFSYLPVRDRIRISRVCHHWKKLVDDRWLWRHV) form the F-box domain. LRR repeat units lie at residues 51 to 78 (LYTM…RMGG), 86 to 111 (APQL…CLHV), 161 to 185 (VPAF…VLGG), 186 to 211 (TYRV…EVLG), 212 to 236 (CTLS…IRLT), 237 to 261 (VRGL…CLLG), and 266 to 291 (PEMP…ELQG).

In terms of assembly, interacts with SKP1 and CUL1.

The protein operates within protein modification; protein ubiquitination. In terms of biological role, substrate-recognition component of the SCF (SKP1-CUL1-F-box protein)-type E3 ubiquitin ligase complex. Mediates the polyubiquitination and proteasomal degradation of CAMK1 leading to disruption of cyclin D1/CDK4 complex assembly which results in G1 cell cycle arrest in lung epithelia. The chain is F-box/LRR-repeat protein 12 (FBXL12) from Bos taurus (Bovine).